Consider the following 210-residue polypeptide: N-(5'-phosphoribosyl)anthranilate isomerase (210 aa).

This sequence belongs to the TrpF family.

It carries out the reaction N-(5-phospho-beta-D-ribosyl)anthranilate = 1-(2-carboxyphenylamino)-1-deoxy-D-ribulose 5-phosphate. It participates in amino-acid biosynthesis; L-tryptophan biosynthesis; L-tryptophan from chorismate: step 3/5. This Staphylococcus aureus (strain bovine RF122 / ET3-1) protein is N-(5'-phosphoribosyl)anthranilate isomerase.